We begin with the raw amino-acid sequence, 386 residues long: Probable family 17 glucosidase SCW4 (386 aa).

An N-terminal signal peptide occupies residues 1–19 (MRLSNLIASASLLSAATLA). Residues 20-30 (APANHEHKDKR) constitute a propeptide that is removed on maturation. The segment at 88–127 (ENNSQVSAAASPASSSAATSTQSSSSSQASSSSSSGEDVS) is disordered. A glycan (N-linked (GlcNAc...) asparagine) is linked at N89. E323 serves as the catalytic Nucleophile.

It belongs to the glycosyl hydrolase 17 family. Post-translationally, N-glycosylated.

The protein localises to the secreted. It is found in the cell wall. Its function is as follows. Glucanases possibly play a role in cell expansion during growth, in cell-cell fusion during mating, and in spore release during sporulation. This Saccharomyces cerevisiae (strain ATCC 204508 / S288c) (Baker's yeast) protein is Probable family 17 glucosidase SCW4 (SCW4).